We begin with the raw amino-acid sequence, 478 residues long: Aspartyl/glutamyl-tRNA(Asn/Gln) amidotransferase subunit B (478 aa).

It belongs to the GatB/GatE family. GatB subfamily. As to quaternary structure, heterotrimer of A, B and C subunits.

The enzyme catalyses L-glutamyl-tRNA(Gln) + L-glutamine + ATP + H2O = L-glutaminyl-tRNA(Gln) + L-glutamate + ADP + phosphate + H(+). It catalyses the reaction L-aspartyl-tRNA(Asn) + L-glutamine + ATP + H2O = L-asparaginyl-tRNA(Asn) + L-glutamate + ADP + phosphate + 2 H(+). Its function is as follows. Allows the formation of correctly charged Asn-tRNA(Asn) or Gln-tRNA(Gln) through the transamidation of misacylated Asp-tRNA(Asn) or Glu-tRNA(Gln) in organisms which lack either or both of asparaginyl-tRNA or glutaminyl-tRNA synthetases. The reaction takes place in the presence of glutamine and ATP through an activated phospho-Asp-tRNA(Asn) or phospho-Glu-tRNA(Gln). The protein is Aspartyl/glutamyl-tRNA(Asn/Gln) amidotransferase subunit B of Pseudothermotoga lettingae (strain ATCC BAA-301 / DSM 14385 / NBRC 107922 / TMO) (Thermotoga lettingae).